A 305-amino-acid chain; its full sequence is MTSIRVLGSAAGGGFPQWNCNCHNCDGVRRGTVRATPRTQSSIALTGDGPDAILVNASPDILQQLRQAPALQPARAPRDTAIAAVVLMDAQIDHVTGLLMLREHREALPLYATAAVLDDLGAAFPLTRILSHYCGLRTHALPCDGTAFSVPPLDGLTLTAIPLESKAPPYSPNRHAPRAGDNIGLRIEDRRSGRSAFYAPGLGRIDDHVFAELHSADIVLVDGTFWRDDEMQAPGFSGKSAADMGHLALSGPGGMIEVLERLPASRKILIHINNTNPVLVEDSPERAELARHGIEVAYDGMEIAL.

It belongs to the PqqB family.

It functions in the pathway cofactor biosynthesis; pyrroloquinoline quinone biosynthesis. In terms of biological role, may be involved in the transport of PQQ or its precursor to the periplasm. The chain is Coenzyme PQQ synthesis protein B from Cupriavidus necator (strain ATCC 17699 / DSM 428 / KCTC 22496 / NCIMB 10442 / H16 / Stanier 337) (Ralstonia eutropha).